The primary structure comprises 124 residues: Ribosome-binding factor A (124 aa).

The protein belongs to the RbfA family. In terms of assembly, monomer. Binds 30S ribosomal subunits, but not 50S ribosomal subunits or 70S ribosomes.

The protein resides in the cytoplasm. Its function is as follows. One of several proteins that assist in the late maturation steps of the functional core of the 30S ribosomal subunit. Associates with free 30S ribosomal subunits (but not with 30S subunits that are part of 70S ribosomes or polysomes). Required for efficient processing of 16S rRNA. May interact with the 5'-terminal helix region of 16S rRNA. This chain is Ribosome-binding factor A, found in Buchnera aphidicola subsp. Schizaphis graminum (strain Sg).